We begin with the raw amino-acid sequence, 547 residues long: Agglutinin-1 (547 aa).

The N-terminal stretch at 1 to 20 is a signal peptide; the sequence is MKFETTKNKLHGNAYYQAQF. Gln21 carries the post-translational modification Pyrrolidone carboxylic acid. Residue Glu183 is part of the active site. Disulfide bonds link Cys266-Cys288, Cys305-Cys324, and Cys348-Cys365. The propeptide at 279–280 is linker peptide; sequence RS. The Ricin B-type lectin 1 domain maps to 292–419; sequence YEPTVRIGGR…YRMRQGWRTG (128 aa). One copy of the 1-alpha repeat lies at 302-344; it reads DGLCVDVSDNAYNNGNPIILWKCKDQLEVNQLWTLKSDKTIRS. The 1-beta repeat unit spans residues 345-385; that stretch reads KGKCLTTYGYAPGNYVMIYDCSSAVAEATYWDIWDNGTIIN. 2 N-linked (GlcNAc...) asparagine glycosylation sites follow: Asn380 and Asn420. The stretch at 388–420 is one 1-gamma repeat; it reads SGLVLSAESSSMGGTLTVQKNDYRMRQGWRTGN. The 125-residue stretch at 422-546 folds into the Ricin B-type lectin 2 domain; it reads TSPFVTSIAG…GNANQMWATL (125 aa). The 2-alpha repeat unit spans residues 433 to 468; that stretch reads FKLCMEAHGNSMWLDVCDITKEEQQWAVYPDGSIRP. Intrachain disulfides connect Cys436–Cys449 and Cys475–Cys492. A 2-beta repeat occupies 472 to 511; that stretch reads TNNCLTCEEHKQGATIVMMGCSNAWASQRWVFKSDGTIYN. A 2-gamma repeat occupies 514–547; sequence DDMVMDVKSSDPSLKQIILWPYTGNANQMWATLF.

This sequence in the N-terminal section; belongs to the ribosome-inactivating protein family. Type 2 RIP subfamily. As to quaternary structure, heterotetramer of two A and two B chains.

The catalysed reaction is Endohydrolysis of the N-glycosidic bond at one specific adenosine on the 28S rRNA.. In terms of biological role, the A chain is responsible for inhibiting protein synthesis through the catalytic inactivation of 60S ribosomal subunits by removing adenine from position 4,324 of 28S rRNA. Less toxic than abrin-a. The B chain is a galactose-specific lectin that facilitates the binding to the cell membrane that precedes endocytosis. The polypeptide is Agglutinin-1 (Abrus precatorius (Indian licorice)).